Consider the following 224-residue polypeptide: Beta-casein (224 aa).

An N-terminal signal peptide occupies residues M1–A15. Phosphoserine occurs at positions 30, 32, 33, and 34. A Phosphoserine; in variant A1, variant A2, variant A3, variant B, variant E, variant F, variant G and variant H modification is found at S50.

Belongs to the beta-casein family. In terms of tissue distribution, mammary gland specific. Secreted in milk.

Its subcellular location is the secreted. Important role in determination of the surface properties of the casein micelles. Functionally, casoparan acts as a macrophage activator, increasing the phagocytic activity of macrophages and peroxide release from macrophages. It also acts as a bradykinin-potentiating peptide. Its function is as follows. Casohypotensin acts as a bradykinin-potentiating peptide. Induces hypotension in rats. Acts as a strong competitive inhibitor of endo-oligopeptidase A. In terms of biological role, antioxidant peptide has antioxidant activity. In Bos taurus (Bovine), this protein is Beta-casein (CSN2).